A 312-amino-acid chain; its full sequence is Small ribosomal subunit biogenesis GTPase RsgA (312 aa).

The region spanning 86-245 (QSFLKRPAVA…LADTPGFNRP (160 aa)) is the CP-type G domain. GTP is bound by residues 135–138 (TKID) and 187–195 (GPSGVGKTS). Cys-270, Cys-275, His-277, and Cys-283 together coordinate Zn(2+).

This sequence belongs to the TRAFAC class YlqF/YawG GTPase family. RsgA subfamily. Monomer. Associates with 30S ribosomal subunit, binds 16S rRNA. It depends on Zn(2+) as a cofactor.

The protein resides in the cytoplasm. In terms of biological role, one of several proteins that assist in the late maturation steps of the functional core of the 30S ribosomal subunit. Helps release RbfA from mature subunits. May play a role in the assembly of ribosomal proteins into the subunit. Circularly permuted GTPase that catalyzes slow GTP hydrolysis, GTPase activity is stimulated by the 30S ribosomal subunit. The chain is Small ribosomal subunit biogenesis GTPase RsgA from Prochlorococcus marinus (strain NATL2A).